The sequence spans 274 residues: Rhamnulose-1-phosphate aldolase (274 aa).

Glu-117 is an active-site residue. Zn(2+) contacts are provided by His-141, His-143, and His-212.

It belongs to the aldolase class II family. RhaD subfamily. As to quaternary structure, homotetramer. Zn(2+) is required as a cofactor.

The protein resides in the cytoplasm. It catalyses the reaction L-rhamnulose 1-phosphate = (S)-lactaldehyde + dihydroxyacetone phosphate. It participates in carbohydrate degradation; L-rhamnose degradation; glycerone phosphate from L-rhamnose: step 3/3. Its function is as follows. Catalyzes the reversible cleavage of L-rhamnulose-1-phosphate to dihydroxyacetone phosphate (DHAP) and L-lactaldehyde. The chain is Rhamnulose-1-phosphate aldolase from Yersinia pestis.